A 157-amino-acid polypeptide reads, in one-letter code: 3-hydroxyacyl-[acyl-carrier-protein] dehydratase FabZ (157 aa).

His58 is a catalytic residue.

The protein belongs to the thioester dehydratase family. FabZ subfamily.

It is found in the cytoplasm. The enzyme catalyses a (3R)-hydroxyacyl-[ACP] = a (2E)-enoyl-[ACP] + H2O. Functionally, involved in unsaturated fatty acids biosynthesis. Catalyzes the dehydration of short chain beta-hydroxyacyl-ACPs and long chain saturated and unsaturated beta-hydroxyacyl-ACPs. In Brucella melitensis biotype 2 (strain ATCC 23457), this protein is 3-hydroxyacyl-[acyl-carrier-protein] dehydratase FabZ.